Here is a 679-residue protein sequence, read N- to C-terminus: Methionine--tRNA ligase (679 aa).

The short motif at 14 to 24 (PYANGSIHLGH) is the 'HIGH' region element. Zn(2+) contacts are provided by C145, C148, C158, and C161. Positions 331-335 (KMSKS) match the 'KMSKS' region motif. K334 contacts ATP. The 103-residue stretch at 577–679 (TFAAVDLRIA…NGAKPGQRVM (103 aa)) folds into the tRNA-binding domain.

The protein belongs to the class-I aminoacyl-tRNA synthetase family. MetG type 1 subfamily. As to quaternary structure, homodimer. Requires Zn(2+) as cofactor.

The protein resides in the cytoplasm. It carries out the reaction tRNA(Met) + L-methionine + ATP = L-methionyl-tRNA(Met) + AMP + diphosphate. Functionally, is required not only for elongation of protein synthesis but also for the initiation of all mRNA translation through initiator tRNA(fMet) aminoacylation. In Stutzerimonas stutzeri (strain A1501) (Pseudomonas stutzeri), this protein is Methionine--tRNA ligase.